We begin with the raw amino-acid sequence, 331 residues long: Serpentine receptor class alpha-1 (331 aa).

The next 7 membrane-spanning stretches (helical) occupy residues 22–42, 57–77, 104–124, 143–163, 189–209, 238–258, and 274–294; these read FAVF…VIAV, IILV…AIIS, YTEV…GILI, VGII…QIII, FLFI…AVMF, ICVV…GVLI, and LITW…ILIF.

Belongs to the nematode receptor-like protein sra family.

It localises to the membrane. In Caenorhabditis elegans, this protein is Serpentine receptor class alpha-1 (sra-1).